A 480-amino-acid polypeptide reads, in one-letter code: Glutamate--tRNA ligase (480 aa).

Positions 8–18 (PSPTGPLHIGG) match the 'HIGH' region motif. The 'KMSKS' region motif lies at 249–253 (KMSKR). Residue K252 coordinates ATP.

Belongs to the class-I aminoacyl-tRNA synthetase family. Glutamate--tRNA ligase type 1 subfamily. Monomer.

The protein localises to the cytoplasm. The enzyme catalyses tRNA(Glu) + L-glutamate + ATP = L-glutamyl-tRNA(Glu) + AMP + diphosphate. Its function is as follows. Catalyzes the attachment of glutamate to tRNA(Glu) in a two-step reaction: glutamate is first activated by ATP to form Glu-AMP and then transferred to the acceptor end of tRNA(Glu). In Carboxydothermus hydrogenoformans (strain ATCC BAA-161 / DSM 6008 / Z-2901), this protein is Glutamate--tRNA ligase.